The chain runs to 236 residues: Peptidase E (236 aa).

Active-site charge relay system residues include Ser122, Asp137, and His159.

The protein belongs to the peptidase S51 family.

The protein resides in the cytoplasm. The catalysed reaction is Dipeptidase E catalyzes the hydrolysis of dipeptides Asp-|-Xaa. It does not act on peptides with N-terminal Glu, Asn or Gln, nor does it cleave isoaspartyl peptides.. Hydrolyzes dipeptides containing N-terminal aspartate residues. May play a role in allowing the cell to use peptide aspartate to spare carbon otherwise required for the synthesis of the aspartate family of amino acids. The chain is Peptidase E from Shewanella sp. (strain W3-18-1).